We begin with the raw amino-acid sequence, 2710 residues long: Serine/threonine-protein kinase ATR (2710 aa).

In terms of domain architecture, FAT spans 1647–2257 (TLAKASFRCQ…LWMMAAVSKS (611 aa)). Positions 2368–2680 (IADDAEILNS…GVNAAPSLPL (313 aa)) constitute a PI3K/PI4K catalytic domain. The segment at 2374-2380 (ILNSLQK) is G-loop. Residues 2545-2553 (GLGDRHGEN) form a catalytic loop region. The segment at 2565–2589 (HVDFSCLFDKGLLLEKPEVVPFRFT) is activation loop. In terms of domain architecture, FATC spans 2678 to 2710 (LPLSVEGQARRLIAEAVSHSNLGKMYVWWMAWF).

This sequence belongs to the PI3/PI4-kinase family. ATM subfamily.

It is found in the nucleus. It carries out the reaction L-seryl-[protein] + ATP = O-phospho-L-seryl-[protein] + ADP + H(+). It catalyses the reaction L-threonyl-[protein] + ATP = O-phospho-L-threonyl-[protein] + ADP + H(+). Its function is as follows. Probable serine/threonine kinase. Seems to play a central role in cell-cycle regulation by transmitting DNA damage signals to downstream effectors of cell-cycle progression. May recognize the substrate consensus sequence [ST]-Q and phosphorylate histone variant H2AX to form H2AXS139ph at sites of DNA damage, thereby regulating DNA damage response mechanism. This chain is Serine/threonine-protein kinase ATR, found in Oryza sativa subsp. indica (Rice).